The sequence spans 437 residues: MRNTELVQWFRQSTPYVNMHREKTFVIMLDGNAIAHPNFINITNDISLLHSLGIKLVIVFGARCQIDELLAKNQMSSTYHKHIRITDSKTLEVVKQAVGGLHYDIFSRLSLRLPNSPVLNVVSSNAVLAQPLGVIDGVDYGLSGKIRRINIEAIQQQLAQDAIVVIGPIAPSVTGEMFNLPFEEIATQIAIKLKADKLIGFCDQQGILDSEGNVLSDLHPREAKRYLTQFIESGQYHHSAARFLQAAIEACHAGIKRSHLLSYKEDGSLLQELFSRDGIGTQLSEESSENIRLATSFDIPGLLNLIRPLEEQGILVKRSREQLEMEISNYTIIERDGIVIACAALNHYPQEKMAEMACVAVHPDYRDSSRGDVLLEAIKRRAYKLQVEKLFVLTTRTTQWFQERGFVLSTTDDLPKEKREHYNYQRMSKILILDLGQ.

In terms of domain architecture, N-acetyltransferase spans Glu289–Lys429.

Belongs to the acetyltransferase family. ArgA subfamily.

The protein resides in the cytoplasm. The enzyme catalyses L-glutamate + acetyl-CoA = N-acetyl-L-glutamate + CoA + H(+). It participates in amino-acid biosynthesis; L-arginine biosynthesis; N(2)-acetyl-L-ornithine from L-glutamate: step 1/4. The protein is Amino-acid acetyltransferase of Actinobacillus pleuropneumoniae serotype 7 (strain AP76).